We begin with the raw amino-acid sequence, 611 residues long: Zinc metalloproteinase-disintegrin-like MTP9 (611 aa).

The signal sequence occupies residues 1–20 (MIEVLLVTICFTVFPYQGSS). A propeptide spanning residues 21–191 (IILESGNVND…DEPIEKISQL (171 aa)) is cleaved from the precursor. One can recognise a Peptidase M12B domain in the interval 205 to 401 (KYIELYVVVD…VRPQCILNKP (197 aa)). Glutamate 208 contacts Ca(2+). The N-linked (GlcNAc...) asparagine glycan is linked to asparagine 282. Aspartate 292 provides a ligand contact to Ca(2+). Disulfide bonds link cysteine 316–cysteine 396, cysteine 356–cysteine 380, and cysteine 358–cysteine 363. Zn(2+) contacts are provided by histidine 341, histidine 345, and histidine 351. Positions 396, 399, 414, 416, 418, 421, and 424 each coordinate Ca(2+). One can recognise a Disintegrin domain in the interval 409–493 (PPVCGNYFVE…ECPTDSFQRN (85 aa)). 15 disulfides stabilise this stretch: cysteine 412-cysteine 441, cysteine 423-cysteine 436, cysteine 425-cysteine 431, cysteine 435-cysteine 456, cysteine 447-cysteine 453, cysteine 452-cysteine 478, cysteine 465-cysteine 485, cysteine 472-cysteine 504, cysteine 497-cysteine 509, cysteine 516-cysteine 566, cysteine 531-cysteine 573, cysteine 541-cysteine 575, cysteine 544-cysteine 554, cysteine 561-cysteine 599, and cysteine 593-cysteine 604. Positions 471–473 (DCD) match the D/ECD-tripeptide motif. Ca(2+) is bound by residues aspartate 473, leucine 474, glutamate 476, and aspartate 488. Asparagine 548 and asparagine 570 each carry an N-linked (GlcNAc...) asparagine glycan.

This sequence belongs to the venom metalloproteinase (M12B) family. P-III subfamily. As to quaternary structure, monomer. Requires Zn(2+) as cofactor. As to expression, expressed by the venom gland.

The protein localises to the secreted. In terms of biological role, snake venom zinc metalloproteinase that may impair hemostasis in the prey. This Drysdalia coronoides (White-lipped snake) protein is Zinc metalloproteinase-disintegrin-like MTP9.